Consider the following 216-residue polypeptide: Imidazole glycerol phosphate synthase subunit HisH (216 aa).

The Glutamine amidotransferase type-1 domain occupies 2 to 216; the sequence is SIAIIDYGSG…LISNFLRWKP (215 aa). Cys88 serves as the catalytic Nucleophile. Residues His196 and Glu198 contribute to the active site.

Heterodimer of HisH and HisF.

It is found in the cytoplasm. The catalysed reaction is 5-[(5-phospho-1-deoxy-D-ribulos-1-ylimino)methylamino]-1-(5-phospho-beta-D-ribosyl)imidazole-4-carboxamide + L-glutamine = D-erythro-1-(imidazol-4-yl)glycerol 3-phosphate + 5-amino-1-(5-phospho-beta-D-ribosyl)imidazole-4-carboxamide + L-glutamate + H(+). It catalyses the reaction L-glutamine + H2O = L-glutamate + NH4(+). It functions in the pathway amino-acid biosynthesis; L-histidine biosynthesis; L-histidine from 5-phospho-alpha-D-ribose 1-diphosphate: step 5/9. In terms of biological role, IGPS catalyzes the conversion of PRFAR and glutamine to IGP, AICAR and glutamate. The HisH subunit catalyzes the hydrolysis of glutamine to glutamate and ammonia as part of the synthesis of IGP and AICAR. The resulting ammonia molecule is channeled to the active site of HisF. The polypeptide is Imidazole glycerol phosphate synthase subunit HisH (Bradyrhizobium diazoefficiens (strain JCM 10833 / BCRC 13528 / IAM 13628 / NBRC 14792 / USDA 110)).